We begin with the raw amino-acid sequence, 185 residues long: Elongation factor P (185 aa).

The protein belongs to the elongation factor P family.

It is found in the cytoplasm. Its pathway is protein biosynthesis; polypeptide chain elongation. Involved in peptide bond synthesis. Stimulates efficient translation and peptide-bond synthesis on native or reconstituted 70S ribosomes in vitro. Probably functions indirectly by altering the affinity of the ribosome for aminoacyl-tRNA, thus increasing their reactivity as acceptors for peptidyl transferase. This Oceanobacillus iheyensis (strain DSM 14371 / CIP 107618 / JCM 11309 / KCTC 3954 / HTE831) protein is Elongation factor P.